A 247-amino-acid polypeptide reads, in one-letter code: Carboxy-S-adenosyl-L-methionine synthase (247 aa).

S-adenosyl-L-methionine is bound by residues Tyr39, Gly64–Ser66, Asp89–Asn90, Asp117–Ile118, Asn132, and Arg199.

The protein belongs to the class I-like SAM-binding methyltransferase superfamily. Cx-SAM synthase family. In terms of assembly, homodimer.

The catalysed reaction is prephenate + S-adenosyl-L-methionine = carboxy-S-adenosyl-L-methionine + 3-phenylpyruvate + H2O. Its function is as follows. Catalyzes the conversion of S-adenosyl-L-methionine (SAM) to carboxy-S-adenosyl-L-methionine (Cx-SAM). The chain is Carboxy-S-adenosyl-L-methionine synthase from Pectobacterium atrosepticum (strain SCRI 1043 / ATCC BAA-672) (Erwinia carotovora subsp. atroseptica).